Here is a 130-residue protein sequence, read N- to C-terminus: D-ribose pyranase (130 aa).

The active-site Proton donor is histidine 20. Substrate is bound by residues aspartate 28, histidine 97, and 119–121; that span reads YSN.

The protein belongs to the RbsD / FucU family. RbsD subfamily. In terms of assembly, homodecamer.

The protein resides in the cytoplasm. The enzyme catalyses beta-D-ribopyranose = beta-D-ribofuranose. The protein operates within carbohydrate metabolism; D-ribose degradation; D-ribose 5-phosphate from beta-D-ribopyranose: step 1/2. Functionally, catalyzes the interconversion of beta-pyran and beta-furan forms of D-ribose. This chain is D-ribose pyranase, found in Lacticaseibacillus casei (strain BL23) (Lactobacillus casei).